A 114-amino-acid chain; its full sequence is DSANFDEYMKAIGIGFAMRQIGSVTKPTLIISAEGDHVTLKTTSTFKNMEWNFTLGEEFDETTADERKTKSTFTVDGDKLVQVQRWEGKETTISRAVSGDSMVATCSIGDVVCA.

Belongs to the calycin superfamily. Fatty-acid binding protein (FABP) family. Post-translationally, the N-terminus is blocked.

The protein resides in the cytoplasm. In terms of biological role, FABPs are thought to play a role in the intracellular transport of long-chain fatty acids and their acyl-CoA esters. In Lethenteron camtschaticum (Japanese lamprey), this protein is Fatty acid-binding protein, liver.